We begin with the raw amino-acid sequence, 942 residues long: UvrABC system protein A (942 aa).

Position 32-39 (glycine 32–serine 39) interacts with ATP. The C4-type zinc-finger motif lies at cysteine 251–cysteine 278. ABC transporter domains follow at residues tryptophan 308 to isoleucine 589 and glycine 609 to lysine 937. Glycine 641 to serine 648 is an ATP binding site. A C4-type zinc finger spans residues cysteine 740–cysteine 766.

This sequence belongs to the ABC transporter superfamily. UvrA family. Forms a heterotetramer with UvrB during the search for lesions.

The protein localises to the cytoplasm. Functionally, the UvrABC repair system catalyzes the recognition and processing of DNA lesions. UvrA is an ATPase and a DNA-binding protein. A damage recognition complex composed of 2 UvrA and 2 UvrB subunits scans DNA for abnormalities. When the presence of a lesion has been verified by UvrB, the UvrA molecules dissociate. The protein is UvrABC system protein A of Streptococcus pyogenes serotype M6 (strain ATCC BAA-946 / MGAS10394).